Here is a 963-residue protein sequence, read N- to C-terminus: Protein suppressor of white apricot (963 aa).

One copy of the SURP motif 1 repeat lies at 234–276; that stretch reads IIEKTARFIATQGAQMEILIKAKQANNTQFDFLTQGGHLQPYY. 2 disordered regions span residues 290-322 and 360-430; these read PAPQ…RRNP and EDES…EPPQ. Over residues 300–317 the composition is skewed to basic and acidic residues; sequence NTDKEAPSADDHSEEVAG. The span at 364 to 375 shows a compositional bias: polar residues; sequence SNPGNSQHSGGT. Positions 407-418 are enriched in basic and acidic residues; sequence THEEESSNREQQ. Phosphoserine occurs at positions 438, 447, 448, and 450. A disordered region spans residues 445–470; the sequence is NYSSESEEEEDQVQPEKEEEKKPEPV. A compositionally biased stretch (basic and acidic residues) spans 458–468; it reads QPEKEEEKKPE. An SURP motif 2 repeat occupies 483–523; it reads IIDKTATYVIKNGRQFEETLRTKSVDRFSFLLPANEYYPYY. 3 disordered regions span residues 593–613, 634–662, and 716–963; these read PQEA…HVRP, TAGQ…ERVK, and PPES…SSSP. Over residues 637–651 the composition is skewed to polar residues; sequence QKGNITASPSCSSPQ. Ser649 bears the Phosphoserine mark. Positions 652–662 are enriched in basic and acidic residues; sequence KEQRQAEERVK. The segment covering 718-727 has biased composition (low complexity); the sequence is ESAAGAATAD. A compositionally biased stretch (acidic residues) spans 768–778; the sequence is DEEDDDEEDGG. Positions 787 to 796 are enriched in polar residues; it reads NDDSTNTFTS. Residues 799–809 show a composition bias toward pro residues; it reads VLPPTAAPPPA. The span at 820 to 830 shows a compositional bias: low complexity; the sequence is QLVATTSTRSS. Positions 831–847 are enriched in basic residues; it reads SSRHLKTHRRSRSRSKN. A compositionally biased stretch (low complexity) spans 848–858; sequence VRSSDSSPSSR. 2 stretches are compositionally biased toward basic residues: residues 861–870 and 882–913; these read SRRRRQKSSR and KSQH…RRSR. Ser912, Ser914, and Ser916 each carry phosphoserine. Residues 934-944 show a composition bias toward basic and acidic residues; that stretch reads AEQRRQQDRRR. The span at 945 to 963 shows a compositional bias: basic residues; sequence TPTKKSHKRHKRRRRSSSP.

The protein localises to the nucleus speckle. Its function is as follows. Regulator of pre-mRNA splicing (and, possibly, of other RNA processing events). Regulates its own expression at the level of RNA processing. The sequence is that of Protein suppressor of white apricot (su(w[a])) from Drosophila melanogaster (Fruit fly).